The primary structure comprises 247 residues: TLC domain-containing protein 1 (247 aa).

Positions 1–27 (MPLLLHPAWPLLLGATLTFRALRRVLC) are cleaved as a signal peptide. Residues 28 to 46 (RLPLPAHVQTDPLRTWRWH) are Extracellular-facing. The TLC domain maps to 40–234 (LRTWRWHNLL…LLRSDFCPER (195 aa)). A helical membrane pass occupies residues 47–67 (NLLVSFTHSIVSGIWALLCIW). The Cytoplasmic segment spans residues 68 to 83 (QTPEMLVEIETAWSVC). Residues 84 to 104 (GYLLVCFSAGYFIHDTVDIVV) form a helical membrane-spanning segment. Over 105–123 (SRQTRASWEYLVHHVMAMG) the chain is Extracellular. The helical intramembrane region spans 124–144 (AFFSGIFWKRFVGGGVLTLLV). At 145–173 (EVSNIFLTLRMMMKINNAQDILLYKVNKY) the chain is on the extracellular side. Residues 174 to 194 (VNLVMYFLFRLAPQAYLTKFF) form a helical membrane-spanning segment. Residues 195–201 (LQYAGQR) are Cytoplasmic-facing. The helical transmembrane segment at 202–222 (TLGTFLLSILLMLDVMILIYF) threads the bilayer. The Extracellular segment spans residues 223 to 247 (SRLLRSDFCPERAPSRQQKDKFLTE).

It localises to the cell membrane. In terms of biological role, regulates the composition and fluidity of the plasma membrane. Inhibits the incorporation of membrane-fluidizing phospholipids containing omega-3 long-chain polyunsaturated fatty acids (LCPUFA) and thereby promotes membrane rigidity. Does not appear to have any effect on LCPUFA synthesis. In Rattus norvegicus (Rat), this protein is TLC domain-containing protein 1 (Tlcd1).